The chain runs to 322 residues: Aspartate carbamoyltransferase catalytic subunit (322 aa).

Carbamoyl phosphate is bound by residues R65 and T66. L-aspartate is bound at residue K93. The carbamoyl phosphate site is built by R115, H143, and Q146. R176 and R230 together coordinate L-aspartate. The carbamoyl phosphate site is built by G271 and P272.

This sequence belongs to the aspartate/ornithine carbamoyltransferase superfamily. ATCase family. Heterododecamer (2C3:3R2) of six catalytic PyrB chains organized as two trimers (C3), and six regulatory PyrI chains organized as three dimers (R2).

The catalysed reaction is carbamoyl phosphate + L-aspartate = N-carbamoyl-L-aspartate + phosphate + H(+). It functions in the pathway pyrimidine metabolism; UMP biosynthesis via de novo pathway; (S)-dihydroorotate from bicarbonate: step 2/3. Catalyzes the condensation of carbamoyl phosphate and aspartate to form carbamoyl aspartate and inorganic phosphate, the committed step in the de novo pyrimidine nucleotide biosynthesis pathway. This Brucella canis (strain ATCC 23365 / NCTC 10854 / RM-666) protein is Aspartate carbamoyltransferase catalytic subunit.